We begin with the raw amino-acid sequence, 205 residues long: Holliday junction branch migration complex subunit RuvA (205 aa).

Residues 1 to 64 (MIGKLKGILE…EEAIRLFGFV (64 aa)) are domain I. The interval 65–143 (AKAEQEWFCL…PFNDNALHFT (79 aa)) is domain II. Positions 144–149 (PQPHLE) are flexible linker. Residues 150–205 (VTHQPTNDALSALVKLGFERDQAARALALAMNALEGETVSSALLIRHSLKLLSPST) form a domain III region.

It belongs to the RuvA family. As to quaternary structure, homotetramer. Forms an RuvA(8)-RuvB(12)-Holliday junction (HJ) complex. HJ DNA is sandwiched between 2 RuvA tetramers; dsDNA enters through RuvA and exits via RuvB. An RuvB hexamer assembles on each DNA strand where it exits the tetramer. Each RuvB hexamer is contacted by two RuvA subunits (via domain III) on 2 adjacent RuvB subunits; this complex drives branch migration. In the full resolvosome a probable DNA-RuvA(4)-RuvB(12)-RuvC(2) complex forms which resolves the HJ.

It is found in the cytoplasm. Functionally, the RuvA-RuvB-RuvC complex processes Holliday junction (HJ) DNA during genetic recombination and DNA repair, while the RuvA-RuvB complex plays an important role in the rescue of blocked DNA replication forks via replication fork reversal (RFR). RuvA specifically binds to HJ cruciform DNA, conferring on it an open structure. The RuvB hexamer acts as an ATP-dependent pump, pulling dsDNA into and through the RuvAB complex. HJ branch migration allows RuvC to scan DNA until it finds its consensus sequence, where it cleaves and resolves the cruciform DNA. This is Holliday junction branch migration complex subunit RuvA from Bartonella quintana (strain Toulouse) (Rochalimaea quintana).